The sequence spans 76 residues: Kappa-actitoxin-Avd4d (76 aa).

A signal peptide spans 1–19 (MNKALFLCLVVLCAAVVFA). Residues 20-31 (AEDLQKAKHVPF) constitute a propeptide that is removed on maturation. 3 cysteine pairs are disulfide-bonded: C37/C72, C39/C65, and C55/C73.

This sequence belongs to the sea anemone type 3 (BDS) potassium channel toxin family. As to expression, moderately expressed in the ectodermal tissue from the distal and proximal tentacles, body wall, and oral disk.

The protein resides in the secreted. It localises to the nematocyst. Its function is as follows. Blocks Kv3 voltage-gated potassium channels. Reduces blood pressure. This chain is Kappa-actitoxin-Avd4d, found in Anemonia viridis (Snakelocks anemone).